The sequence spans 248 residues: Proteasome subunit alpha (248 aa).

Position 2 is an N-acetylserine; partial (Ser2).

Belongs to the peptidase T1A family. In terms of assembly, the 20S proteasome core is composed of 14 alpha and 14 beta subunits that assemble into four stacked heptameric rings, resulting in a barrel-shaped structure. The two inner rings, each composed of seven catalytic beta subunits, are sandwiched by two outer rings, each composed of seven alpha subunits. The catalytic chamber with the active sites is on the inside of the barrel. Has a gated structure, the ends of the cylinder being occluded by the N-termini of the alpha-subunits. Is capped by the proteasome-associated ATPase, ARC.

It is found in the cytoplasm. It participates in protein degradation; proteasomal Pup-dependent pathway. The formation of the proteasomal ATPase ARC-20S proteasome complex, likely via the docking of the C-termini of ARC into the intersubunit pockets in the alpha-rings, may trigger opening of the gate for substrate entry. Interconversion between the open-gate and close-gate conformations leads to a dynamic regulation of the 20S proteasome proteolysis activity. In terms of biological role, component of the proteasome core, a large protease complex with broad specificity involved in protein degradation. This chain is Proteasome subunit alpha, found in Mycobacterium tuberculosis (strain CDC 1551 / Oshkosh).